The chain runs to 245 residues: 1-(5-phosphoribosyl)-5-[(5-phosphoribosylamino)methylideneamino] imidazole-4-carboxamide isomerase (245 aa).

Asp7 functions as the Proton acceptor in the catalytic mechanism. The active-site Proton donor is Asp129.

Belongs to the HisA/HisF family.

The protein resides in the cytoplasm. The catalysed reaction is 1-(5-phospho-beta-D-ribosyl)-5-[(5-phospho-beta-D-ribosylamino)methylideneamino]imidazole-4-carboxamide = 5-[(5-phospho-1-deoxy-D-ribulos-1-ylimino)methylamino]-1-(5-phospho-beta-D-ribosyl)imidazole-4-carboxamide. Its pathway is amino-acid biosynthesis; L-histidine biosynthesis; L-histidine from 5-phospho-alpha-D-ribose 1-diphosphate: step 4/9. The sequence is that of 1-(5-phosphoribosyl)-5-[(5-phosphoribosylamino)methylideneamino] imidazole-4-carboxamide isomerase from Escherichia coli O127:H6 (strain E2348/69 / EPEC).